We begin with the raw amino-acid sequence, 243 residues long: uncharacterized protein (243 aa).

It belongs to the methyltransferase superfamily.

This is an uncharacterized protein from Mycobacterium tuberculosis (strain CDC 1551 / Oshkosh).